Here is a 687-residue protein sequence, read N- to C-terminus: POZ-, AT hook-, and zinc finger-containing protein 1 (687 aa).

Positions 41–130 (CDVLLRVGDE…AYTSRIVVRL (90 aa)) constitute a BTB domain. Lysine 112 is covalently cross-linked (Glycyl lysine isopeptide (Lys-Gly) (interchain with G-Cter in SUMO2)). Low complexity predominate over residues 250–260 (PFPSVASSAPP). Residues 250 to 278 (PFPSVASSAPPLTGKRGRGRPRKANLLDS) are disordered. The a.T hook DNA-binding region spans 264–276 (KRGRGRPRKANLL). Lysine 272 participates in a covalent cross-link: Glycyl lysine isopeptide (Lys-Gly) (interchain with G-Cter in SUMO2). Position 282 is a phosphoserine (serine 282). The C2H2-type 1 zinc finger occupies 292–314 (LPCGLCGKVFTDANRLRQHEAQH). Residues 332–351 (GENGLPISEDPDGPRKRSRT) form a disordered region. C2H2-type zinc fingers lie at residues 355–377 (VACE…KLSH), 383–405 (YSCP…VRSH), 413–436 (YICQ…KQVH), 442–464 (HKCQ…LACH), and 495–518 (NFCS…KTHH). The span at 549-558 (EGQKCSHQDP) shows a compositional bias: basic and acidic residues. Positions 549–603 (EGQKCSHQDPIESSDSYGDLSDASDLKTPEKQSANGSFSCDMAVPKNKMESDGEK) are disordered. Residues 605 to 628 (YPCPECGSFFRSKSYLNKHIQKVH) form a C2H2-type 7 zinc finger.

Belongs to the krueppel C2H2-type zinc-finger protein family. Homodimer. Interacts with RNF4. Interacts (via C-terminus) with TP53; this interaction inhibits TP53 ability to activate transcription. Ubiquitous.

The protein localises to the nucleus. Its function is as follows. Transcriptional regulator that plays a role in many biological processes such as embryogenesis, senescence, T-cell development or neurogenesis. Interacts with the TP53 protein to control genes that are important in proliferation and in the DNA-damage response. Mechanistically, the interaction inhibits the DNA binding and transcriptional activity of TP53/p53. Part of the transcriptional network modulating regulatory T-cell development and controls the generation of the regulatory T-cell pool under homeostatic conditions. In terms of biological role, (Microbial infection) Plays a positive role in viral cDNA synthesis. This is POZ-, AT hook-, and zinc finger-containing protein 1 (PATZ1) from Homo sapiens (Human).